The primary structure comprises 816 residues: Cation/H(+) antiporter 8 (816 aa).

12 helical membrane-spanning segments follow: residues 64-84 (PKLEIVILLVFFLWQGFNILF), 97-117 (MMLAGLLLNVLVTLSGENSII), 127-147 (IDVAGCLGSFGFLIFWFLKGV), 163-183 (VTGVAAVTFPIVVGFLLFNLK), 197-214 (VMLLMESITSFSGIARLL), 227-247 (VALSSALVSDIVGLLLLIANV), 255-275 (ADGLAILTEITLFLVIAFAVV), 297-317 (IHGVLVLVCLSCMYWEDLSQF), 343-363 (LESFNFGIILPLFLTAVMLRT), 382-402 (FAVASLVLLIFLLKLSVSVIV), 413-433 (SIILALIMSHKGIIELSFYLF), and 447-467 (ILVLSIVLNSLLIPMAIGFLY).

Belongs to the monovalent cation:proton antiporter 2 (CPA2) transporter (TC 2.A.37) family. CHX (TC 2.A.37.4) subfamily. In terms of tissue distribution, specifically expressed in pollen.

The protein localises to the membrane. Functionally, may operate as a cation/H(+) antiporter. In Arabidopsis thaliana (Mouse-ear cress), this protein is Cation/H(+) antiporter 8 (CHX8).